Consider the following 85-residue polypeptide: Small ribosomal subunit protein uS17 (85 aa).

The protein belongs to the universal ribosomal protein uS17 family. As to quaternary structure, part of the 30S ribosomal subunit.

In terms of biological role, one of the primary rRNA binding proteins, it binds specifically to the 5'-end of 16S ribosomal RNA. This chain is Small ribosomal subunit protein uS17, found in Actinobacillus succinogenes (strain ATCC 55618 / DSM 22257 / CCUG 43843 / 130Z).